A 692-amino-acid chain; its full sequence is Elongation factor G (692 aa).

The 275-residue stretch at 8-282 (ENTRNIGIMA…AVIDYLPSPV (275 aa)) folds into the tr-type G domain. Residues 17–24 (AHIDAGKT), 81–85 (DTPGH), and 135–138 (NKMD) contribute to the GTP site.

The protein belongs to the TRAFAC class translation factor GTPase superfamily. Classic translation factor GTPase family. EF-G/EF-2 subfamily.

It is found in the cytoplasm. Catalyzes the GTP-dependent ribosomal translocation step during translation elongation. During this step, the ribosome changes from the pre-translocational (PRE) to the post-translocational (POST) state as the newly formed A-site-bound peptidyl-tRNA and P-site-bound deacylated tRNA move to the P and E sites, respectively. Catalyzes the coordinated movement of the two tRNA molecules, the mRNA and conformational changes in the ribosome. In Lysinibacillus sphaericus (strain C3-41), this protein is Elongation factor G.